The chain runs to 712 residues: Ribosomal RNA large subunit methyltransferase K/L (712 aa).

Residues 43–154 (LAYRITLWTR…NGQLTISMNF (112 aa)) enclose the THUMP domain.

This sequence belongs to the methyltransferase superfamily. RlmKL family.

Its subcellular location is the cytoplasm. It catalyses the reaction guanosine(2445) in 23S rRNA + S-adenosyl-L-methionine = N(2)-methylguanosine(2445) in 23S rRNA + S-adenosyl-L-homocysteine + H(+). It carries out the reaction guanosine(2069) in 23S rRNA + S-adenosyl-L-methionine = N(2)-methylguanosine(2069) in 23S rRNA + S-adenosyl-L-homocysteine + H(+). Specifically methylates the guanine in position 2445 (m2G2445) and the guanine in position 2069 (m7G2069) of 23S rRNA. In Shewanella frigidimarina (strain NCIMB 400), this protein is Ribosomal RNA large subunit methyltransferase K/L.